A 101-amino-acid chain; its full sequence is DNA-binding protein Fis (101 aa).

The H-T-H motif DNA-binding region spans 77-96 (QTRAANMLGINRGTLRKKLK).

This sequence belongs to the transcriptional regulatory Fis family. In terms of assembly, homodimer.

Its function is as follows. Activates ribosomal RNA transcription. Plays a direct role in upstream activation of rRNA promoters. The chain is DNA-binding protein Fis from Shewanella denitrificans (strain OS217 / ATCC BAA-1090 / DSM 15013).